Reading from the N-terminus, the 126-residue chain is Small ribosomal subunit protein uS13 (126 aa).

Residues 95-126 (NLPVHGQRTHTNARTRKGPRRAIAGKKKAGKK) are disordered.

Belongs to the universal ribosomal protein uS13 family. Part of the 30S ribosomal subunit. Forms a loose heterodimer with protein S19. Forms two bridges to the 50S subunit in the 70S ribosome.

In terms of biological role, located at the top of the head of the 30S subunit, it contacts several helices of the 16S rRNA. In the 70S ribosome it contacts the 23S rRNA (bridge B1a) and protein L5 of the 50S subunit (bridge B1b), connecting the 2 subunits; these bridges are implicated in subunit movement. Contacts the tRNAs in the A and P-sites. The sequence is that of Small ribosomal subunit protein uS13 from Frankia casuarinae (strain DSM 45818 / CECT 9043 / HFP020203 / CcI3).